We begin with the raw amino-acid sequence, 120 residues long: MRQRQERLSALIREEISEILLRRVKDPRISSFLVITEVKMSKDLRYAHIYVSVYGSEEEKKQTMQGLESAKGFIRSELGKDLRIRFVPEIFFELDDSLEKGDRILRKLKELGLEDEQDSE.

It belongs to the RbfA family. In terms of assembly, monomer. Binds 30S ribosomal subunits, but not 50S ribosomal subunits or 70S ribosomes.

It localises to the cytoplasm. Its function is as follows. One of several proteins that assist in the late maturation steps of the functional core of the 30S ribosomal subunit. Associates with free 30S ribosomal subunits (but not with 30S subunits that are part of 70S ribosomes or polysomes). Required for efficient processing of 16S rRNA. May interact with the 5'-terminal helix region of 16S rRNA. The sequence is that of Ribosome-binding factor A from Dictyoglomus thermophilum (strain ATCC 35947 / DSM 3960 / H-6-12).